The primary structure comprises 138 residues: Holo-[acyl-carrier-protein] synthase (138 aa).

Positions 8 and 60 each coordinate Mg(2+).

The protein belongs to the P-Pant transferase superfamily. AcpS family. It depends on Mg(2+) as a cofactor.

It is found in the cytoplasm. The enzyme catalyses apo-[ACP] + CoA = holo-[ACP] + adenosine 3',5'-bisphosphate + H(+). Its function is as follows. Transfers the 4'-phosphopantetheine moiety from coenzyme A to a Ser of acyl-carrier-protein. The sequence is that of Holo-[acyl-carrier-protein] synthase from Magnetococcus marinus (strain ATCC BAA-1437 / JCM 17883 / MC-1).